A 788-amino-acid chain; its full sequence is Integrin beta-3 (788 aa).

An N-terminal signal peptide occupies residues 1–26 (MRARPRPRPLWATVLALGALAGVGVG). The Extracellular portion of the chain corresponds to 27-718 (GPNICTTRGV…EEPECPKGPD (692 aa)). In terms of domain architecture, PSI spans 30-76 (ICTTRGVSSCQQCLAVSPMCAWCSDEALPLGSPRCDLKENLLKDNCA). Intrachain disulfides connect cysteine 31–cysteine 49, cysteine 39–cysteine 461, cysteine 42–cysteine 64, cysteine 52–cysteine 75, cysteine 203–cysteine 210, cysteine 258–cysteine 299, cysteine 400–cysteine 412, cysteine 432–cysteine 459, cysteine 463–cysteine 483, cysteine 474–cysteine 486, cysteine 488–cysteine 497, cysteine 499–cysteine 529, cysteine 512–cysteine 527, cysteine 521–cysteine 532, cysteine 534–cysteine 547, cysteine 549–cysteine 570, cysteine 554–cysteine 568, cysteine 562–cysteine 573, and cysteine 575–cysteine 584. Asparagine 125 carries an N-linked (GlcNAc...) asparagine glycan. Residues 135-377 (DYPVDIYYLM…QLIVDAYGKI (243 aa)) enclose the VWFA domain. Mg(2+)-binding residues include serine 147 and serine 149. Ca(2+) is bound by residues serine 149, aspartate 152, aspartate 153, and aspartate 184. The tract at residues 203-210 (CYDMKTTC) is involved in CX3CL1-, NRG1-, FGF1- and IGF1-binding. The Ca(2+) site is built by asparagine 241, aspartate 243, proline 245, glutamate 246, and aspartate 277. Residue glutamate 246 coordinates Mg(2+). The segment at 293-313 (QPNDGQCHVGSDNHYSASTTM) is CX3CL1-binding. The N-linked (GlcNAc...) asparagine glycan is linked to asparagine 346. Methionine 361 contacts Ca(2+). Asparagine 397 carries an N-linked (GlcNAc...) asparagine glycan. 4 consecutive I-EGF domains span residues 463–498 (CQAQ…SQCE), 499–548 (CSEE…KYCE), 549–585 (CDDF…YYCN), and 586–625 (CTTR…DTCE). Asparagine 478 is a glycosylation site (N-linked (GlcNAc...) asparagine). An N-linked (GlcNAc...) asparagine glycan is attached at asparagine 585. 9 disulfides stabilise this stretch: cysteine 586/cysteine 609, cysteine 593/cysteine 607, cysteine 601/cysteine 612, cysteine 614/cysteine 624, cysteine 627/cysteine 630, cysteine 634/cysteine 681, cysteine 640/cysteine 661, cysteine 643/cysteine 657, and cysteine 689/cysteine 713. A glycan (N-linked (GlcNAc...) asparagine) is linked at asparagine 680. The helical transmembrane segment at 719 to 741 (ILVVLLSVMGAILLIGLAALLIW) threads the bilayer. Residues 742-788 (KLLITIHDRKEFAKFEEERARAKWDTANNPLYKEATSTFTNITYRGT) are Cytoplasmic-facing. A Phosphothreonine modification is found at threonine 767. At tyrosine 773 the chain carries Phosphotyrosine. The LIR signature appears at 777–783 (TSTFTNI). Threonine 779 bears the Phosphothreonine; by PDPK1 and PKB/AKT1; in vitro mark. The residue at position 785 (tyrosine 785) is a Phosphotyrosine.

It belongs to the integrin beta chain family. As to quaternary structure, heterodimer of an alpha and a beta subunit. Beta-3 (ITGB3) associates with either alpha-IIb (ITGA2B) or alpha-V (ITGAV). Isoform Beta-3C interacts with FLNB. Interacts with COMP. Interacts with PDIA6 following platelet stimulation. Interacts with SYK; upon activation by ITGB3 promotes platelet adhesion. Interacts with MYO10. Interacts with DAB2. Interacts with FERMT2. Interacts with EMP2; regulates the levels of the heterodimer ITGA5:ITGB3 integrin expression on the plasma membrane. Integrin ITGAV:ITGB3 interacts with FBLN5 (via N-terminus). ITGAV:ITGB3 interacts with CCN3. ITGAV:ITGB3 and ITGA2B:ITGB3 interact with SELP (via C-type lectin domain); the interaction mediates cell-cell interaction and adhesion. ITGAV:ITGB3 is found in a ternary complex with CX3CR1 and CX3CL1. ITGAV:ITGB3 is found in a ternary complex with NRG1 and ERBB3. ITGAV:ITGB3 is found in a ternary complex with FGF1 and FGFR1. ITGAV:ITGB3 interacts with FGF2; it is likely that FGF2 can simultaneously bind ITGAV:ITGB3 and FGF receptors. ITGAV:ITGB3 binds to IL1B. ITGAV:ITGB3 is found in a ternary complex with IGF1 and IGF1R. ITGAV:ITGB3 interacts with IGF2. ITGAV:ITGB3 interacts with FBN1. ITGAV:ITGB3 interacts with CD9, CD81 and CD151 (via second extracellular domain). Interacts (via the allosteric site (site 2)) with CXCL12 in a CXCR4-independent manner. Interacts with MXRA8/DICAM; the interaction inhibits ITGAV:ITGB3 heterodimer formation. ITGAV:ITGB3 interacts with PTN. Forms a complex with PTPRZ1 and PTN that stimulates endothelial cell migration through ITGB3 Tyr-773 phosphorylation. ITGAV:ITGB3 interacts with SLC6A4. Interacts with SLC6A4 (via C-terminus); this interaction regulates SLC6A4 trafficking. ITGA2B:ITGB3 interacts with PPIA/CYPA; the interaction is ROS and PPIase activity-dependent and is increased in the presence of thrombin. Interacts with tensin TNS3; TNS3 also interacts with PEAK1, thus acting as an adapter molecule to bridge the association of PEAK1 with ITGB3. Interacts with TM4SF19. In terms of assembly, (Microbial infection) Integrin ITGAV:ITGB3 interacts with herpes virus 8/HHV-8 glycoprotein B. (Microbial infection) Integrin ITGAV:ITGB3 interacts with coxsackievirus A9 capsid proteins. As to quaternary structure, (Microbial infection) Interacts with Hantaan virus glycoprotein G. In terms of assembly, (Microbial infection) Integrin ITGAV:ITGB3 interacts with cytomegalovirus/HHV-5 gH:gL proteins. (Microbial infection) Integrin ITGA5:ITGB3 interacts with human metapneumovirus fusion protein. As to quaternary structure, (Microbial infection) Integrin ITGAV:ITGB3 interacts with human parechovirus 1 capsid proteins. In terms of assembly, (Microbial infection) Integrin ITGAV:ITGB3 interacts with west nile virus envelope protein E. (Microbial infection) Interacts with HIV-1 Tat. ITGAV:ITGB3 interacts with AGRA2. In terms of processing, phosphorylated on tyrosine residues in response to thrombin-induced platelet aggregation. Probably involved in outside-in signaling. A peptide (AA 740-762) is capable of binding GRB2 only when both Tyr-773 and Tyr-785 are phosphorylated. Phosphorylation of Thr-779 inhibits SHC binding. As to expression, isoform beta-3A and isoform beta-3C are widely expressed. Isoform beta-3A is specifically expressed in osteoblast cells; isoform beta-3C is specifically expressed in prostate and testis.

It localises to the cell membrane. Its subcellular location is the cell projection. The protein localises to the lamellipodium membrane. The protein resides in the cell junction. It is found in the focal adhesion. It localises to the postsynaptic cell membrane. Its subcellular location is the synapse. In terms of biological role, integrin alpha-V/beta-3 (ITGAV:ITGB3) is a receptor for cytotactin, fibronectin, laminin, matrix metalloproteinase-2, osteopontin, osteomodulin, prothrombin, thrombospondin, vitronectin and von Willebrand factor. Integrin alpha-IIb/beta-3 (ITGA2B:ITGB3) is a receptor for fibronectin, fibrinogen, plasminogen, prothrombin, thrombospondin and vitronectin. Integrins alpha-IIb/beta-3 and alpha-V/beta-3 recognize the sequence R-G-D in a wide array of ligands. Integrin alpha-IIb/beta-3 recognizes the sequence H-H-L-G-G-G-A-K-Q-A-G-D-V in fibrinogen gamma chain. Following activation integrin alpha-IIb/beta-3 brings about platelet/platelet interaction through binding of soluble fibrinogen. This step leads to rapid platelet aggregation which physically plugs ruptured endothelial surface. Fibrinogen binding enhances SELP expression in activated platelets. ITGAV:ITGB3 binds to fractalkine (CX3CL1) and acts as its coreceptor in CX3CR1-dependent fractalkine signaling. ITGAV:ITGB3 binds to NRG1 (via EGF domain) and this binding is essential for NRG1-ERBB signaling. ITGAV:ITGB3 binds to FGF1 and this binding is essential for FGF1 signaling. ITGAV:ITGB3 binds to FGF2 and this binding is essential for FGF2 signaling. ITGAV:ITGB3 binds to IGF1 and this binding is essential for IGF1 signaling. ITGAV:ITGB3 binds to IGF2 and this binding is essential for IGF2 signaling. ITGAV:ITGB3 binds to IL1B and this binding is essential for IL1B signaling. ITGAV:ITGB3 binds to PLA2G2A via a site (site 2) which is distinct from the classical ligand-binding site (site 1) and this induces integrin conformational changes and enhanced ligand binding to site 1. ITGAV:ITGB3 acts as a receptor for fibrillin-1 (FBN1) and mediates R-G-D-dependent cell adhesion to FBN1. In brain, plays a role in synaptic transmission and plasticity. Involved in the regulation of the serotonin neurotransmission, is required to localize to specific compartments within the synapse the serotonin receptor SLC6A4 and for an appropriate reuptake of serotonin. Controls excitatory synaptic strength by regulating GRIA2-containing AMPAR endocytosis, which affects AMPAR abundance and composition. ITGAV:ITGB3 act as a receptor for CD40LG. ITGAV:ITGB3 acts as a receptor for IBSP and promotes cell adhesion and migration to IBSP. (Microbial infection) Integrin ITGAV:ITGB3 acts as a receptor for Herpes virus 8/HHV-8. Functionally, (Microbial infection) Integrin ITGAV:ITGB3 acts as a receptor for Coxsackievirus A9. Its function is as follows. (Microbial infection) Acts as a receptor for Hantaan virus. In terms of biological role, (Microbial infection) Integrin ITGAV:ITGB3 acts as a receptor for Cytomegalovirus/HHV-5. (Microbial infection) Integrin ITGA5:ITGB3 acts as a receptor for Human metapneumovirus. Functionally, (Microbial infection) Integrin ITGAV:ITGB3 acts aP05556s a receptor for Human parechovirus 1. Its function is as follows. (Microbial infection) Integrin ITGAV:ITGB3 acts as a receptor for West nile virus. In terms of biological role, (Microbial infection) In case of HIV-1 infection, the interaction with extracellular viral Tat protein seems to enhance angiogenesis in Kaposi's sarcoma lesions. In Homo sapiens (Human), this protein is Integrin beta-3.